A 66-amino-acid polypeptide reads, in one-letter code: MKEGIHPMYNEVTVKCACGNSFLTRSTRKEIFTEICSACHPFFTGKQKLVDTAGRVERFKKRYGQA.

Zn(2+) contacts are provided by Cys-16, Cys-18, Cys-36, and Cys-39.

Belongs to the bacterial ribosomal protein bL31 family. Type A subfamily. As to quaternary structure, part of the 50S ribosomal subunit. The cofactor is Zn(2+).

Binds the 23S rRNA. The polypeptide is Large ribosomal subunit protein bL31 (Trichlorobacter lovleyi (strain ATCC BAA-1151 / DSM 17278 / SZ) (Geobacter lovleyi)).